The primary structure comprises 83 residues: MKTLLLTLVVVTIVCLDLGYTRICFNHQSSQPQTTKTCSPGESSCYHKQWSDFRGTIIERGCGCPTVKPGIKLSCCESEVCNN.

The first 21 residues, 1 to 21, serve as a signal peptide directing secretion; that stretch reads MKTLLLTLVVVTIVCLDLGYT. Residues 24-38 form a loop I region; the sequence is CFNHQSSQPQTTKTC. Cystine bridges form between C24/C45, C38/C62, C64/C75, and C76/C81. Residues 39–44 form a stretch between loop I and loop II region; sequence SPGESS. Positions 45–62 are loop II; sequence CYHKQWSDFRGTIIERGC. Positions 64-75 are loop III; the sequence is CPTVKPGIKLSC.

It belongs to the three-finger toxin family. Short-chain subfamily. Type I alpha-neurotoxin sub-subfamily. Expressed by the venom gland.

The protein localises to the secreted. Binds with high affinity to muscular nicotinic acetylcholine receptors (nAChRs) (tested on Torpedo marmorata, Kd=0.07 nM), and with low affinity to neuronal alpha-7/CHRNA7 nAChRs (tested on chimeric alpha-7/CHRNA7, Kd=22 uM) and inhibit acetylcholine from binding to the receptor, thereby impairing neuromuscular transmission. Produces peripheral paralysis by blocking neuromuscular transmission at the postsynaptic site. The sequence is that of Erabutoxin b from Laticauda semifasciata (Black-banded sea krait).